A 1084-amino-acid polypeptide reads, in one-letter code: SAETEKEMANMKEEFEKTKESLAKAEAKRKELEEKMVALMQEKNDLQLQVQAEADSLADAEERQDLIKTKIQLEAKIKEVTERAEDEEEINAELTAKKRKLEDECSELKKDIDDLELTLAKVEKEKHATENKVKNLTEEMAGLDETIAKLTKEKKALQEAHQQTLDDLQAEEDKVNTLTKAKTKLEQQVDDLEGSLEQEKKIRMDLERAKRKLEGDLKLAQETSMDIENDKQQLDEKLKKLEFMTNLQSKIEDEQALMTNLQRIEELEEEIEAERASRAKAEKQRSDLSRELEEISERLEEAGGATSAQIEMNKKREAEFEKMRRDLEEATLQHEATAAALRKKHADSVAELGEQIDNLQRVKQKLEKEKSELKMEIDDLAGNMETVSKAKGNLEKMCRTLEDQLSEVKTKEEEHQRLINELSAQKARLHTESGEFSRQLDEKDAMVSQLSRGGQAFTQQIEGLKRQLEEETKAKSALAHALQSSRRDCDLLREQYEEEQEAKAELQRAMSKANSEVSQWRTKCETDAIQRTEELEEAKKKLAQRLQDAEEHVEAVNSKCASLEKTKQRLQNEAEDLMIDVERSNATCARMDKKQRNFDKVLAEWKHKYEETQAELEASQKESRSLSTEVFKVKNAYEESLDHLETLKRENKNLQQEISDLTEQIAESAKHIHELEKVKKQIDQEKSELQAALEEAEGSLEHEEGKILRIQLELNQVKSEIDRKIAEKDEEIDQLKRNHLRVVESMQSTLDAEIRSRNDALRIKKKMEGDLNEMEIQLNHANRQAAEAIKNLRNTQGILKDTQLHLDDAVRGQDDHKEQLAMVERRANLMQAEIEELRASLEQTERSRRVADQDLLDASERVQLLHTQNTSLINTKKKLETDISQIQGEMEDIVQEARNAEEKAKKAITDAAMMAEELKKEQDTSAHLERMKKNMEQTVKDLQQRLDEAEQLALKGGKKQIQKLEARVKELENEVESEQKRNVEAVKGLRKHERRVKELTYQTEEDRKNVLRLQDLVDKLQSKVKAYKRQAEEAEEQSNINLSKFRKLQHELEEAEERADIAESQVNKLRVKSRDVHSKVISEE.

Disordered stretches follow at residues 1–20 (SAETEKEMANMKEEFEKTKE), 270–292 (EIEAERASRAKAEKQRSDLSREL), and 298–317 (RLEEAGGATSAQIEMNKKRE). The alpha-helical tailpiece (S2) stretch occupies residues 1 to 258 (SAETEKEMAN…SKIEDEQALM (258 aa)). Residues 259–1084 (TNLQRIEELE…DVHSKVISEE (826 aa)) are rodlike tail (S2 and LMM domains). The span at 273–292 (AERASRAKAEKQRSDLSREL) shows a compositional bias: basic and acidic residues. Residues 455–1084 (QAFTQQIEGL…DVHSKVISEE (630 aa)) adopt a coiled-coil conformation.

Muscle myosin is a hexameric protein that consists of 2 heavy chain subunits (MHC), 2 alkali light chain subunits (MLC) and 2 regulatory light chain subunits (MLC-2).

The protein resides in the cytoplasm. Its subcellular location is the myofibril. In terms of biological role, muscle contraction. The protein is Myosin heavy chain, skeletal muscle of Oryctolagus cuniculus (Rabbit).